Reading from the N-terminus, the 527-residue chain is tRNA (uracil(54)-C(5))-methyltransferase (527 aa).

A TRAM domain is found at 107–167; that stretch reads PFERFQEIEV…DTYALADFLE (61 aa). Residues C182, C188, C191, and C276 each coordinate [4Fe-4S] cluster. Residues Q347, Y383, E404, and D451 each coordinate S-adenosyl-L-methionine. Residue C478 is the Nucleophile of the active site. Catalysis depends on E517, which acts as the Proton acceptor.

It belongs to the class I-like SAM-binding methyltransferase superfamily. RNA M5U methyltransferase family.

It catalyses the reaction uridine(54) in tRNA + S-adenosyl-L-methionine = 5-methyluridine(54) in tRNA + S-adenosyl-L-homocysteine + H(+). Its function is as follows. Catalyzes the formation of 5-methyl-uridine at position 54 (m5U54) in all tRNA. May also have a role in tRNA stabilization or maturation. This is tRNA (uracil(54)-C(5))-methyltransferase from Schizosaccharomyces pombe (strain 972 / ATCC 24843) (Fission yeast).